The following is a 237-amino-acid chain: Leucyl/phenylalanyl-tRNA--protein transferase (237 aa).

This sequence belongs to the L/F-transferase family.

Its subcellular location is the cytoplasm. It carries out the reaction N-terminal L-lysyl-[protein] + L-leucyl-tRNA(Leu) = N-terminal L-leucyl-L-lysyl-[protein] + tRNA(Leu) + H(+). The catalysed reaction is N-terminal L-arginyl-[protein] + L-leucyl-tRNA(Leu) = N-terminal L-leucyl-L-arginyl-[protein] + tRNA(Leu) + H(+). It catalyses the reaction L-phenylalanyl-tRNA(Phe) + an N-terminal L-alpha-aminoacyl-[protein] = an N-terminal L-phenylalanyl-L-alpha-aminoacyl-[protein] + tRNA(Phe). Functionally, functions in the N-end rule pathway of protein degradation where it conjugates Leu, Phe and, less efficiently, Met from aminoacyl-tRNAs to the N-termini of proteins containing an N-terminal arginine or lysine. The chain is Leucyl/phenylalanyl-tRNA--protein transferase from Shewanella baltica (strain OS223).